A 147-amino-acid chain; its full sequence is Ribonuclease P protein component 2 (147 aa).

Belongs to the eukaryotic/archaeal RNase P protein component 2 family. As to quaternary structure, consists of a catalytic RNA component and at least 4-5 protein subunits.

Its subcellular location is the cytoplasm. The catalysed reaction is Endonucleolytic cleavage of RNA, removing 5'-extranucleotides from tRNA precursor.. In terms of biological role, part of ribonuclease P, a protein complex that generates mature tRNA molecules by cleaving their 5'-ends. The chain is Ribonuclease P protein component 2 from Methanocorpusculum labreanum (strain ATCC 43576 / DSM 4855 / Z).